Consider the following 119-residue polypeptide: NADH-ubiquinone oxidoreductase chain 3 (119 aa).

3 helical membrane-spanning segments follow: residues 8-28, 63-83, and 88-108; these read IFIY…VPFL, LVSI…PWAV, and IDLF…IGFL.

This sequence belongs to the complex I subunit 3 family.

The protein localises to the mitochondrion membrane. The catalysed reaction is a ubiquinone + NADH + 5 H(+)(in) = a ubiquinol + NAD(+) + 4 H(+)(out). In terms of biological role, core subunit of the mitochondrial membrane respiratory chain NADH dehydrogenase (Complex I) that is believed to belong to the minimal assembly required for catalysis. Complex I functions in the transfer of electrons from NADH to the respiratory chain. The immediate electron acceptor for the enzyme is believed to be ubiquinone. The sequence is that of NADH-ubiquinone oxidoreductase chain 3 (ND3) from Brassica napus (Rape).